We begin with the raw amino-acid sequence, 1006 residues long: Unconventional myosin-Id (1006 aa).

Residue Ala-2 is modified to N-acetylalanine. Positions 9-695 constitute a Myosin motor domain; it reads FGKADFVLMD…TLFTLEELRA (687 aa). 102 to 109 provides a ligand contact to ATP; sequence GESGAGKT. Position 200 is a phosphoserine (Ser-200). Phosphotyrosine is present on Tyr-536. Residues 572–594 form an actin-binding region; sequence MIALVDNLASKEPYYVRCIKPND. IQ domains follow at residues 699-719 and 721-741; these read IRIV…MRYK and TKAA…SYIQ. The TH1 domain maps to 812–1005; it reads GQRADLGLQR…RSGFILSVPG (194 aa).

This sequence belongs to the TRAFAC class myosin-kinesin ATPase superfamily. Myosin family. As to quaternary structure, interacts (via the two IQ motifs) with calmodulin. Binds an additional calmodulin chain via a third, C-terminal region. Interacts with F-actin.

The protein localises to the cytoplasm. Its subcellular location is the perikaryon. The protein resides in the cell projection. It is found in the dendrite. It localises to the early endosome. The protein localises to the cell cortex. Its function is as follows. Unconventional myosin that functions as actin-based motor protein with ATPase activity. Plays a role in endosomal protein trafficking, and especially in the transfer of cargo proteins from early to recycling endosomes. Required for normal planar cell polarity in ciliated tracheal cells, for normal rotational polarity of cilia, and for coordinated, unidirectional ciliary movement in the trachea. Required for normal, polarized cilia organization in brain ependymal epithelial cells. The polypeptide is Unconventional myosin-Id (MYO1D) (Canis lupus familiaris (Dog)).